The following is an 853-amino-acid chain: DNA mismatch repair protein MutS (853 aa).

613–620 (GPNMGGKS) contacts ATP.

It belongs to the DNA mismatch repair MutS family.

Its function is as follows. This protein is involved in the repair of mismatches in DNA. It is possible that it carries out the mismatch recognition step. This protein has a weak ATPase activity. This Vibrio vulnificus (strain YJ016) protein is DNA mismatch repair protein MutS.